Consider the following 598-residue polypeptide: Elongation factor 4 (598 aa).

The 183-residue stretch at 4 to 186 (INIRNFAIIA…AIVSRLPAPS (183 aa)) folds into the tr-type G domain. Residues 16 to 21 (DHGKST) and 133 to 136 (NKID) contribute to the GTP site.

The protein belongs to the TRAFAC class translation factor GTPase superfamily. Classic translation factor GTPase family. LepA subfamily.

The protein localises to the cell inner membrane. The enzyme catalyses GTP + H2O = GDP + phosphate + H(+). Its function is as follows. Required for accurate and efficient protein synthesis under certain stress conditions. May act as a fidelity factor of the translation reaction, by catalyzing a one-codon backward translocation of tRNAs on improperly translocated ribosomes. Back-translocation proceeds from a post-translocation (POST) complex to a pre-translocation (PRE) complex, thus giving elongation factor G a second chance to translocate the tRNAs correctly. Binds to ribosomes in a GTP-dependent manner. In Ehrlichia ruminantium (strain Welgevonden), this protein is Elongation factor 4.